A 321-amino-acid polypeptide reads, in one-letter code: Sideroflexin-1-3 (321 aa).

Transmembrane regions (helical) follow at residues 101 to 121, 146 to 168, 174 to 194, 220 to 240, and 266 to 286; these read IITG…FWQW, LVTS…NHAV, LLGR…NIPC, AAVV…IPGM, and IQTL…CAFF.

It belongs to the sideroflexin family.

It is found in the mitochondrion membrane. Mitochondrial amino-acid transporter that mediates transport of serine into mitochondria. This chain is Sideroflexin-1-3, found in Drosophila melanogaster (Fruit fly).